Consider the following 573-residue polypeptide: Glutathione hydrolase 5 proenzyme (573 aa).

Residues 1–8 (MAWGHRAT) are Cytoplasmic-facing. Residues 9-29 (VCLVLLGVGLGLVIVVLAAVL) traverse the membrane as a helical; Signal-anchor for type II membrane protein segment. Residues 30-573 (SPRQASCGPG…LRKAGKASGY (544 aa)) lie on the Extracellular side of the membrane. N-linked (GlcNAc...) asparagine glycosylation is present at Asn98. Arg110 provides a ligand contact to L-glutamate. 6 N-linked (GlcNAc...) asparagine glycosylation sites follow: Asn185, Asn204, Asn277, Asn303, Asn347, and Asn378. Thr389 acts as the Nucleophile in catalysis. L-glutamate is bound by residues Thr407, Glu428, and 454 to 455 (SS).

The protein belongs to the gamma-glutamyltransferase family. Heterodimer composed of the light and heavy chains. The active site is located in the light chain. Cleaved by autocatalysis into a large and a small subunit. Post-translationally, glycosylated. As to expression, very low level of expression. Detected in spleen lymphocytes, medullary and paracortical thymic lymphocytes, lung interstitial cells, bronchial epithelium, proximal tubules in kidney, crypt cells in small intestine, neurons in brain stem and cerebral cortex and in Purkinje cells. In terms of tissue distribution, very low expression.

It localises to the membrane. The catalysed reaction is glutathione + H2O = L-cysteinylglycine + L-glutamate. The enzyme catalyses an S-substituted glutathione + H2O = an S-substituted L-cysteinylglycine + L-glutamate. It carries out the reaction leukotriene C4 + H2O = leukotriene D4 + L-glutamate. It catalyses the reaction S-[(2E,6E,10E)-geranylgeranyl]-L-glutathione + H2O = S-[(2E,6E,10E)-geranylgeranyl]-L-cysteinylglycine + L-glutamate. The catalysed reaction is an N-terminal (5-L-glutamyl)-[peptide] + an alpha-amino acid = 5-L-glutamyl amino acid + an N-terminal L-alpha-aminoacyl-[peptide]. It functions in the pathway lipid metabolism; leukotriene D4 biosynthesis. The protein operates within sulfur metabolism; glutathione metabolism. With respect to regulation, inhibited by serine-borate. In terms of biological role, cleaves the gamma-glutamyl bond of extracellular glutathione tripeptide (gamma-Glu-Cys-Gly) and certain glutathione conjugates. Hydrolyzes glutathione releasing L-Glu and Cys-Gly dipeptide which is further metabolized to maintain extracellular cysteine levels but also to provide cysteine necessary for intracellular glutathione synthesis. Among glutathione-S-conjugates metabolizes leukotriene C4 (LTC4) and S-geranylgeranyl-glutathione (GGG), but is inactive toward gamma-glutamyl leucine. Converts extracellular LTC4 to LTD4 during acute inflammatory response. Acts as a negative regulator of GGG bioactivity. GGT5 (via GGG catabolism) and ABCC1 (via extracellular transport) establish GGG gradients within lymphoid tissues to position P2RY8-positive lymphocytes at germinal centers in lymphoid follicles and restrict their chemotactic transmigration from blood vessels to bone marrow parenchyma. The transpeptidation reaction, i.e. the transfer of gamma-glutamyl moiety to an acceptor molecule to yield a new gamma-glutamyl compound requires high concentration of dipeptide acceptor and is considered nonphysiological. The protein is Glutathione hydrolase 5 proenzyme (Ggt5) of Mus musculus (Mouse).